The following is a 137-amino-acid chain: MKRLLTLAWFLACSVPAVPGGLLELKSMIEKVTGKNAVKNYGFYGCYCGWGGHGTPKDGTDWCCRMHDRCYGLLEEKHCAIRTQSYDYRFTQDLVICEHDSFCPVRLCACDRKLVYCLRRNLWSYNRLYQYYPNFLC.

The signal sequence occupies residues 1 to 20; the sequence is MKRLLTLAWFLACSVPAVPG. 6 disulfide bridges follow: Cys-46-Cys-137, Cys-48-Cys-64, Cys-63-Cys-117, Cys-70-Cys-110, Cys-79-Cys-103, and Cys-97-Cys-108. Residues Tyr-47, Gly-49, and Gly-51 each contribute to the Ca(2+) site. His-67 is a catalytic residue. Asp-68 contacts Ca(2+). Residue Asp-111 is part of the active site.

The protein belongs to the phospholipase A2 family. Ca(2+) is required as a cofactor. This enzyme lacks one of the seven disulfide bonds found in similar PA2 proteins.

The protein localises to the secreted. Its subcellular location is the cell membrane. It localises to the cytoplasmic vesicle. The protein resides in the phagosome. It is found in the recycling endosome. The protein localises to the golgi apparatus. Its subcellular location is the cis-Golgi network. It localises to the trans-Golgi network. The enzyme catalyses a 1,2-diacyl-sn-glycero-3-phosphocholine + H2O = a 1-acyl-sn-glycero-3-phosphocholine + a fatty acid + H(+). It catalyses the reaction 1-hexadecanoyl-2-(9Z-octadecenoyl)-sn-glycero-3-phosphocholine + H2O = 1-hexadecanoyl-sn-glycero-3-phosphocholine + (9Z)-octadecenoate + H(+). It carries out the reaction 1-hexadecanoyl-2-(5Z,8Z,11Z,14Z-eicosatetraenoyl)-sn-glycero-3-phosphocholine + H2O = 1-hexadecanoyl-sn-glycero-3-phosphocholine + (5Z,8Z,11Z,14Z)-eicosatetraenoate + H(+). The catalysed reaction is 1-hexadecanoyl-2-(9Z,12Z-octadecadienoyl)-sn-glycero-3-phosphoethanolamine + H2O = 1-hexadecanoyl-sn-glycero-3-phosphoethanolamine + (9Z,12Z)-octadecadienoate + H(+). The enzyme catalyses 1-hexadecanoyl-2-(5Z,8Z,11Z,14Z-eicosatetraenoyl)-sn-glycero-3-phosphoethanolamine + H2O = 1-hexadecanoyl-sn-glycero-3-phosphoethanolamine + (5Z,8Z,11Z,14Z)-eicosatetraenoate + H(+). It catalyses the reaction 1-octadecanoyl-2-(5Z,8Z,11Z,14Z-eicosatetraenoyl)-sn-glycero-3-phospho-(1D-myo-inositol) + H2O = 1-octadecanoyl-sn-glycero-3-phospho-(1D-myo-inositol) + (5Z,8Z,11Z,14Z)-eicosatetraenoate + H(+). It carries out the reaction 1-hexadecanoyl-2-(9Z-octadecenoyl)-sn-glycero-3-phosphoglycerol + H2O = 1-hexadecanoyl-sn-glycero-3-phosphoglycerol + (9Z)-octadecenoate + H(+). The catalysed reaction is N-hexadecanoyl-1,2-di-(9Z-octadecenoyl)-sn-glycero-3-phosphoethanolamine + H2O = N-hexadecanoyl-1-(9Z-octadecenoyl)-sn-glycero-3-phosphoethanolamine + (9Z)-octadecenoate + H(+). The enzyme catalyses 1'-[1,2-di-(9Z-octadecenoyl)-sn-glycero-3-phospho]-3'-[1-(9Z-octadecenoyl)-sn-glycero-3-phospho]-glycerol + H2O = 1',3'-bis-[1-(9Z-octadecenoyl)-sn-glycero-3-phospho]-glycerol + (9Z)-octadecenoate + H(+). It catalyses the reaction 1',3'-bis[1,2-di-(9Z-octadecenoyl)-sn-glycero-3-phospho]-glycerol + H2O = 1'-[1,2-di-(9Z-octadecenoyl)-sn-glycero-3-phospho]-3'-[1-(9Z-octadecenoyl)-sn-glycero-3-phospho]-glycerol + (9Z)-octadecenoate + H(+). It participates in lipid metabolism; phospholipid metabolism. It functions in the pathway lipid metabolism; leukotriene B4 biosynthesis. The protein operates within lipid metabolism; leukotriene C4 biosynthesis. Secretory calcium-dependent phospholipase A2 that primarily targets extracellular phospholipids. Hydrolyzes the ester bond of the fatty acyl group attached at sn-2 position of phospholipids (phospholipase A2 activity), preferentially releasing fatty acyl groups with a low degree of unsaturation such as oleoyl (C18:1) and linoleoyl (C18:2) groups. Hydrolyzes low-density lipoprotein (LDL) phospholipids releasing unsaturated fatty acids that drive macrophage polarization toward an M2 phenotype. May act in an autocrine and paracrine manner. Contributes to lipid remodeling of cellular membranes at different subcellular locations and generation of lipid mediators involved in pathogen clearance. Cleaves sn-2 fatty acyl chains of cardiolipin, a major component of the inner membrane of mitochondria and bacterial membranes. Promotes phagocytosis of bacteria in macrophages through production of lysophosphatidylethanolamines. Displays bactericidal activity against Gram-positive bacteria by directly hydrolyzing phospholipids of the bacterial membrane. Promotes phagocytosis and killing of ingested fungi likely through controlling phagosome-lysosome fusion and phagosome maturation. Plays a role in biosynthesis of cysteinyl leukotrienes (CysLTs) in myeloid cells. In eosinophils, triggers perinuclear arachidonate release and LTC4 synthesis in a PLA2G4A-independent way. In neutrophils, amplifies CysLTs biosynthesis initiated by PLA2G4A. Promotes immune complex clearance in macrophages via stimulating synthesis of CysLTs, which act through CYSLTR1 to trigger phagocytosis. May regulate antigen processing in antigen-presenting cells. In pulmonary macrophages regulates IL33 production required for activation of group 2 innate lymphoid cells. May play a role in the biosynthesis of N-acyl ethanolamines that regulate energy metabolism. Hydrolyzes N-acyl phosphatidylethanolamines to N-acyl lysophosphatidylethanolamines, which are further cleaved by a lysophospholipase D to release N-acyl ethanolamines. The polypeptide is Phospholipase A2 group V (Pla2g5) (Rattus norvegicus (Rat)).